The primary structure comprises 490 residues: Aspartyl/glutamyl-tRNA(Asn/Gln) amidotransferase subunit B (490 aa).

Belongs to the GatB/GatE family. GatB subfamily. Heterotrimer of A, B and C subunits.

The enzyme catalyses L-glutamyl-tRNA(Gln) + L-glutamine + ATP + H2O = L-glutaminyl-tRNA(Gln) + L-glutamate + ADP + phosphate + H(+). The catalysed reaction is L-aspartyl-tRNA(Asn) + L-glutamine + ATP + H2O = L-asparaginyl-tRNA(Asn) + L-glutamate + ADP + phosphate + 2 H(+). In terms of biological role, allows the formation of correctly charged Asn-tRNA(Asn) or Gln-tRNA(Gln) through the transamidation of misacylated Asp-tRNA(Asn) or Glu-tRNA(Gln) in organisms which lack either or both of asparaginyl-tRNA or glutaminyl-tRNA synthetases. The reaction takes place in the presence of glutamine and ATP through an activated phospho-Asp-tRNA(Asn) or phospho-Glu-tRNA(Gln). This chain is Aspartyl/glutamyl-tRNA(Asn/Gln) amidotransferase subunit B, found in Prochlorococcus marinus (strain MIT 9515).